We begin with the raw amino-acid sequence, 277 residues long: Large ribosomal subunit protein uL2 (277 aa).

Positions 219 to 277 (TVRGSVMNPNDHPHGGGEGKAPVGRKAPSTPWGKPALGLKTRNKKAKSDKLIVRRRNEK) are disordered. A compositionally biased stretch (basic and acidic residues) spans 264–277 (AKSDKLIVRRRNEK).

This sequence belongs to the universal ribosomal protein uL2 family. In terms of assembly, part of the 50S ribosomal subunit. Forms a bridge to the 30S subunit in the 70S ribosome.

In terms of biological role, one of the primary rRNA binding proteins. Required for association of the 30S and 50S subunits to form the 70S ribosome, for tRNA binding and peptide bond formation. It has been suggested to have peptidyltransferase activity; this is somewhat controversial. Makes several contacts with the 16S rRNA in the 70S ribosome. In Streptococcus gordonii (strain Challis / ATCC 35105 / BCRC 15272 / CH1 / DL1 / V288), this protein is Large ribosomal subunit protein uL2.